The sequence spans 294 residues: sn-glycerol-3-phosphate transport system permease protein UgpA (294 aa).

The Cytoplasmic segment spans residues 1–11 (MSPSRPGFSCS). The chain crosses the membrane as a helical span at residues 12–32 (WLPYLLVLPQLAITAIFFLWP). At 33 to 80 (AGEALWYSVQTLDPFGLSSEFVGLSNFIQLFQDEYYLASFYTTLIFSA) the chain is on the periplasmic side. Residues 72-284 (FYTTLIFSAL…LLVIGLTVIQ (213 aa)) form the ABC transmembrane type-1 domain. The helical transmembrane segment at 81 to 101 (LVAGIGLNVSLFLAAMVDYVL) threads the bilayer. Over 102–109 (RGSRLYQT) the chain is Cytoplasmic. The chain crosses the membrane as a helical span at residues 110 to 130 (LLILPYAVAPAVAAVLWIFLF). The Periplasmic segment spans residues 131 to 157 (DPGLGLITHALAKLGYSWNHAQNSGQA). A helical membrane pass occupies residues 158–178 (MFLVVLASVWKQISYNFLFFL). The Cytoplasmic segment spans residues 179–207 (AALQSIPKSLVEAAAIDGAGPVRRFFNLV). Residues 208–228 (LPLISPVSFFLLVVNLVYAFF) traverse the membrane as a helical segment. Topologically, residues 229-262 (DTFPVIDAATGGGPVQATTTLIYKIYREGFAGLD) are periplasmic. A helical transmembrane segment spans residues 263-283 (LSSSAAQSVILMLLVIGLTVI). At 284–294 (QFRFVERKVRY) the chain is on the cytoplasmic side.

The protein belongs to the binding-protein-dependent transport system permease family. UgpAE subfamily. In terms of assembly, the complex is composed of two ATP-binding proteins (UgpC), two transmembrane proteins (UgpA and UgpE) and a solute-binding protein (UgpB).

The protein localises to the cell inner membrane. Functionally, part of the ABC transporter complex UgpBAEC involved in sn-glycerol-3-phosphate (G3P) import. Probably responsible for the translocation of the substrate across the membrane. This chain is sn-glycerol-3-phosphate transport system permease protein UgpA (ugpA), found in Yersinia pseudotuberculosis serotype I (strain IP32953).